The sequence spans 149 residues: 3-dehydroquinate dehydratase (149 aa).

The active-site Proton acceptor is the Y23. Residues N74, H80, and D87 each contribute to the substrate site. H100 serves as the catalytic Proton donor. Substrate-binding positions include 101–102 (LS) and R111.

This sequence belongs to the type-II 3-dehydroquinase family. Homododecamer.

It carries out the reaction 3-dehydroquinate = 3-dehydroshikimate + H2O. It functions in the pathway metabolic intermediate biosynthesis; chorismate biosynthesis; chorismate from D-erythrose 4-phosphate and phosphoenolpyruvate: step 3/7. Functionally, catalyzes a trans-dehydration via an enolate intermediate. The chain is 3-dehydroquinate dehydratase from Ruegeria pomeroyi (strain ATCC 700808 / DSM 15171 / DSS-3) (Silicibacter pomeroyi).